The primary structure comprises 429 residues: Histidine--tRNA ligase (429 aa).

Belongs to the class-II aminoacyl-tRNA synthetase family. In terms of assembly, homodimer.

Its subcellular location is the cytoplasm. It catalyses the reaction tRNA(His) + L-histidine + ATP = L-histidyl-tRNA(His) + AMP + diphosphate + H(+). The polypeptide is Histidine--tRNA ligase (Cyanothece sp. (strain PCC 7425 / ATCC 29141)).